Consider the following 330-residue polypeptide: uncharacterized protein (330 aa).

125–132 (GPPGCGKT) provides a ligand contact to ATP.

Belongs to the AAA ATPase family.

This is an uncharacterized protein from Sinorhizobium fredii (strain NBRC 101917 / NGR234).